The primary structure comprises 319 residues: 4-diphosphocytidyl-2-C-methyl-D-erythritol kinase (319 aa).

Residue K21 is part of the active site. 106–116 (PIGAGLAGGSS) serves as a coordination point for ATP. Residue D148 is part of the active site.

This sequence belongs to the GHMP kinase family. IspE subfamily.

The enzyme catalyses 4-CDP-2-C-methyl-D-erythritol + ATP = 4-CDP-2-C-methyl-D-erythritol 2-phosphate + ADP + H(+). It participates in isoprenoid biosynthesis; isopentenyl diphosphate biosynthesis via DXP pathway; isopentenyl diphosphate from 1-deoxy-D-xylulose 5-phosphate: step 3/6. Catalyzes the phosphorylation of the position 2 hydroxy group of 4-diphosphocytidyl-2C-methyl-D-erythritol. The polypeptide is 4-diphosphocytidyl-2-C-methyl-D-erythritol kinase (Prochlorococcus marinus (strain MIT 9303)).